We begin with the raw amino-acid sequence, 446 residues long: Tubulin beta chain (446 aa).

Residues glutamine 11, glutamate 69, serine 138, glycine 142, threonine 143, glycine 144, asparagine 204, and asparagine 226 each contribute to the GTP site. Glutamate 69 serves as a coordination point for Mg(2+). The tract at residues 423-446 (QQYQDATADEEEGEYEEEPAEEEQ) is disordered. Positions 429–446 (TADEEEGEYEEEPAEEEQ) are enriched in acidic residues.

It belongs to the tubulin family. Dimer of alpha and beta chains. A typical microtubule is a hollow water-filled tube with an outer diameter of 25 nm and an inner diameter of 15 nM. Alpha-beta heterodimers associate head-to-tail to form protofilaments running lengthwise along the microtubule wall with the beta-tubulin subunit facing the microtubule plus end conferring a structural polarity. Microtubules usually have 13 protofilaments but different protofilament numbers can be found in some organisms and specialized cells. Mg(2+) serves as cofactor.

The protein resides in the cytoplasm. The protein localises to the cytoskeleton. Tubulin is the major constituent of microtubules, a cylinder consisting of laterally associated linear protofilaments composed of alpha- and beta-tubulin heterodimers. Microtubules grow by the addition of GTP-tubulin dimers to the microtubule end, where a stabilizing cap forms. Below the cap, tubulin dimers are in GDP-bound state, owing to GTPase activity of alpha-tubulin. The sequence is that of Tubulin beta chain from Pleurotus sajor-caju (Oyster mushroom).